Here is a 489-residue protein sequence, read N- to C-terminus: E3 ubiquitin-protein ligase RGLG1 (489 aa).

Basic and acidic residues predominate over residues 1–10 (MGGGNSKEES). Positions 1–125 (MGGGNSKEES…SQSQVADRKK (125 aa)) are disordered. The N-myristoyl glycine moiety is linked to residue glycine 2. The span at 11 to 23 (SSPSSSSWASHQS) shows a compositional bias: low complexity. A compositionally biased stretch (pro residues) spans 34–57 (YPPPPTYAPAPSPAPAPAPVPAPS). Residues 58-75 (PASSYGPQYSQEGYASQP) show a composition bias toward low complexity. The segment covering 76–88 (NNPPPPTYAPAPS) has biased composition (pro residues). A VWFA domain is found at 156-376 (NLIVGIDFTK…KETEFALSAL (221 aa)). The RING-type zinc finger occupies 446 to 479 (CPICLSNPKNMAFGCGHQTCCECGPDLKVCPICR).

Interacts with the heterodimer UBC35/UEV1B. Interacts with ERF053. Interacts with PP2CA. Post-translationally, N-myristoylated. In terms of tissue distribution, ubiquitously expressed.

It is found in the cell membrane. The protein resides in the nucleus. The catalysed reaction is S-ubiquitinyl-[E2 ubiquitin-conjugating enzyme]-L-cysteine + [acceptor protein]-L-lysine = [E2 ubiquitin-conjugating enzyme]-L-cysteine + N(6)-ubiquitinyl-[acceptor protein]-L-lysine.. Functionally, E3 ubiquitin-protein ligase that mediates the formation of 'Lys-63'-linked ubiquitin chains. Regulates apical dominance by acting on the auxin transport proteins abundance. Together with RGLG5, mediates the ubiquitination and subsequent proteasomal degradation of the target protein PP2CA. Functions as a positive regulator of abscisic acid (ABA) signaling through ABA-dependent degradation of PP2CA, a major inhibitor of ABA signaling. Acts as a negative regulator of drought stress response. The protein is E3 ubiquitin-protein ligase RGLG1 of Arabidopsis thaliana (Mouse-ear cress).